A 208-amino-acid chain; its full sequence is Probable GTP-binding protein EngB (208 aa).

One can recognise an EngB-type G domain in the interval 25 to 199; the sequence is TGIEVAFAGR…RQKLDSWYNG (175 aa). GTP is bound by residues 33 to 40, 60 to 64, 78 to 81, 145 to 148, and 178 to 180; these read GRSNAGKS, GRTQL, DLPG, TKSD, and FSS. Mg(2+) is bound by residues Ser40 and Thr62.

Belongs to the TRAFAC class TrmE-Era-EngA-EngB-Septin-like GTPase superfamily. EngB GTPase family. Mg(2+) is required as a cofactor.

Necessary for normal cell division and for the maintenance of normal septation. This is Probable GTP-binding protein EngB from Enterobacter sp. (strain 638).